The sequence spans 309 residues: Ornithine carbamoyltransferase (309 aa).

Residues Ser-56–Thr-59, Gln-83, Arg-107, and His-134–Gln-137 contribute to the carbamoyl phosphate site. L-ornithine is bound by residues Asn-165, Asp-223, and Ser-227–Met-228. Carbamoyl phosphate-binding positions include Cys-263–Leu-264 and Arg-291.

The protein belongs to the aspartate/ornithine carbamoyltransferase superfamily. OTCase family.

The protein resides in the cytoplasm. The catalysed reaction is carbamoyl phosphate + L-ornithine = L-citrulline + phosphate + H(+). The protein operates within amino-acid biosynthesis; L-arginine biosynthesis; L-arginine from L-ornithine and carbamoyl phosphate: step 1/3. Its function is as follows. Reversibly catalyzes the transfer of the carbamoyl group from carbamoyl phosphate (CP) to the N(epsilon) atom of ornithine (ORN) to produce L-citrulline. This is Ornithine carbamoyltransferase from Burkholderia lata (strain ATCC 17760 / DSM 23089 / LMG 22485 / NCIMB 9086 / R18194 / 383).